Consider the following 190-residue polypeptide: MAKATTIKEALSRWEEKTGQKPSDAKEIKLYAQIPPIEKMDASLSTLGNCEKLSLSTNCIEKIANLNGLKNLRILSLGRNNIKNLNGLEAVGETLEELWISYNFIEKLKGIHVMKKLKILYMSNNLVKDWAEFLKLAELPCLEDLVFVGNPLEEKHSAEGNWIDEATKRVPKLKKLDGTPVIKEDEEEES.

At A2 the chain carries N-acetylalanine. LRR repeat units lie at residues 49–70 (NCEKLSLSTNCIEKIANLNGLK), 71–92 (NLRILSLGRNNIKNLNGLEAVG), 94–115 (TLEELWISYNFIEKLKGIHVMK), and 116–137 (KLKILYMSNNLVKDWAEFLKLA). Phosphoserine is present on S56. The LRRCT domain maps to 150–190 (NPLEEKHSAEGNWIDEATKRVPKLKKLDGTPVIKEDEEEES).

This sequence belongs to the dynein light chain LC1-type family. Interacts with ZMYND10 (via C-terminus). Interacts with DNAH5, a outer arm dynein heavy chain. Interacts with tubulin located within the A-tubule of the outer doublets in a ATP-independent manner. In terms of tissue distribution, expressed in the respiratory epithelium of the upper airways and the ependymal cells lining the brain ventricles.

The protein localises to the cytoplasm. It localises to the cytoskeleton. It is found in the cilium axoneme. Its function is as follows. Part of the multisubunit axonemal ATPase complexes that generate the force for cilia motility and govern beat frequency. Component of the outer arm dynein (ODA). May be involved in a mechanosensory feedback mechanism controlling ODA activity based on external conformational cues by tethering the outer arm dynein heavy chain (DNAH5) to the microtubule within the axoneme. Important for ciliary function in the airways and for the function of the cilia that produce the nodal flow essential for the determination of the left-right asymmetry. The protein is Dynein axonemal light chain 1 (Dnal1) of Mus musculus (Mouse).